Reading from the N-terminus, the 436-residue chain is Glutamate-1-semialdehyde 2,1-aminomutase (436 aa).

Lys-276 is subject to N6-(pyridoxal phosphate)lysine.

Belongs to the class-III pyridoxal-phosphate-dependent aminotransferase family. HemL subfamily. As to quaternary structure, homodimer. The cofactor is pyridoxal 5'-phosphate.

The protein localises to the cytoplasm. The catalysed reaction is (S)-4-amino-5-oxopentanoate = 5-aminolevulinate. It participates in porphyrin-containing compound metabolism; protoporphyrin-IX biosynthesis; 5-aminolevulinate from L-glutamyl-tRNA(Glu): step 2/2. The protein operates within porphyrin-containing compound metabolism; chlorophyll biosynthesis. The sequence is that of Glutamate-1-semialdehyde 2,1-aminomutase from Synechococcus sp. (strain JA-2-3B'a(2-13)) (Cyanobacteria bacterium Yellowstone B-Prime).